A 101-amino-acid polypeptide reads, in one-letter code: MEVVDPNLDPWKHPGSQPETPCNKCYCKKCCFHCQLCFTRKGLGISYGRKKRRQRRRTPQSGEVHQDPVSKQPLSQTRGDPKGPEESKKKVESKTKTDPSD.

The tract at residues 1-20 (MEVVDPNLDPWKHPGSQPET) is disordered. An interaction with human CREBBP region spans residues 1–24 (MEVVDPNLDPWKHPGSQPETPCNK). Residues 1-48 (MEVVDPNLDPWKHPGSQPETPCNKCYCKKCCFHCQLCFTRKGLGISYG) form a transactivation region. Zn(2+) contacts are provided by Cys22, Cys25, and Cys27. Residues 22 to 37 (CNKCYCKKCCFHCQLC) are cysteine-rich. Lys28 is subject to N6-acetyllysine; by host PCAF. Zn(2+) is bound by residues Cys30, His33, Cys34, and Cys37. Residues 38 to 48 (FTRKGLGISYG) are core. The interval 47–101 (YGRKKRRQRRRTPQSGEVHQDPVSKQPLSQTRGDPKGPEESKKKVESKTKTDPSD) is disordered. Residues 48 to 58 (GRKKRRQRRRT) show a composition bias toward basic residues. Positions 49–57 (RKKRRQRRR) match the Nuclear localization signal, RNA-binding (TAR), and protein transduction motif. The segment at 49–86 (RKKRRQRRRTPQSGEVHQDPVSKQPLSQTRGDPKGPEE) is interaction with the host capping enzyme RNGTT. 2 positions are modified to N6-acetyllysine; by host EP300 and GCN5L2: Lys50 and Lys51. Arg52 and Arg53 each carry asymmetric dimethylarginine; by host PRMT6. Residue Lys71 forms a Glycyl lysine isopeptide (Lys-Gly) (interchain with G-Cter in ubiquitin) linkage. A Cell attachment site motif is present at residues 78-80 (RGD). Basic and acidic residues predominate over residues 79–101 (GDPKGPEESKKKVESKTKTDPSD).

The protein belongs to the lentiviruses Tat family. In terms of assembly, interacts with host CCNT1. Associates with the P-TEFb complex composed at least of Tat, P-TEFb (CDK9 and CCNT1), TAR RNA, RNA Pol II. Recruits the HATs CREBBP, TAF1/TFIID, EP300, PCAF and GCN5L2. Interacts with host KAT5/Tip60; this interaction targets the latter to degradation. Interacts with the host deacetylase SIRT1. Interacts with host capping enzyme RNGTT; this interaction stimulates RNGTT. Binds to host KDR, and to the host integrins ITGAV/ITGB3 and ITGA5/ITGB1. Interacts with host KPNB1/importin beta-1 without previous binding to KPNA1/importin alpha-1. Interacts with EIF2AK2. Interacts with host nucleosome assembly protein NAP1L1; this interaction may be required for the transport of Tat within the nucleus, since the two proteins interact at the nuclear rim. Interacts with host C1QBP/SF2P32; this interaction involves lysine-acetylated Tat. Interacts with the host chemokine receptors CCR2, CCR3 and CXCR4. Interacts with host DPP4/CD26; this interaction may trigger an anti-proliferative effect. Interacts with host LDLR. Interacts with the host extracellular matrix metalloproteinase MMP1. Interacts with host PRMT6; this interaction mediates Tat's methylation. Interacts with, and is ubiquitinated by MDM2/Hdm2. Interacts with host PSMC3 and HTATIP2. Interacts with STAB1; this interaction may overcome SATB1-mediated repression of IL2 and IL2RA (interleukin) in T cells by binding to the same domain than HDAC1. Interacts (when acetylated) with human CDK13, thereby increasing HIV-1 mRNA splicing and promoting the production of the doubly spliced HIV-1 protein Nef. Interacts with host TBP; this interaction modulates the activity of transcriptional pre-initiation complex. Interacts with host RELA. Interacts with host PLSCR1; this interaction negatively regulates Tat transactivation activity by altering its subcellular distribution. Asymmetrical arginine methylation by host PRMT6 seems to diminish the transactivation capacity of Tat and affects the interaction with host CCNT1. In terms of processing, acetylation by EP300, CREBBP, GCN5L2/GCN5 and PCAF regulates the transactivation activity of Tat. EP300-mediated acetylation of Lys-50 promotes dissociation of Tat from the TAR RNA through the competitive binding to PCAF's bromodomain. In addition, the non-acetylated Tat's N-terminus can also interact with PCAF. PCAF-mediated acetylation of Lys-28 enhances Tat's binding to CCNT1. Lys-50 is deacetylated by SIRT1. Post-translationally, polyubiquitination by host MDM2 does not target Tat to degradation, but activates its transactivation function and fosters interaction with CCNT1 and TAR RNA. Phosphorylated by EIF2AK2 on serine and threonine residues adjacent to the basic region important for TAR RNA binding and function. Phosphorylation of Tat by EIF2AK2 is dependent on the prior activation of EIF2AK2 by dsRNA.

Its subcellular location is the host nucleus. The protein resides in the host nucleolus. It is found in the host cytoplasm. The protein localises to the secreted. In terms of biological role, transcriptional activator that increases RNA Pol II processivity, thereby increasing the level of full-length viral transcripts. Recognizes a hairpin structure at the 5'-LTR of the nascent viral mRNAs referred to as the transactivation responsive RNA element (TAR) and recruits the cyclin T1-CDK9 complex (P-TEFb complex) that will in turn hyperphosphorylate the RNA polymerase II to allow efficient elongation. The CDK9 component of P-TEFb and other Tat-activated kinases hyperphosphorylate the C-terminus of RNA Pol II that becomes stabilized and much more processive. Other factors such as HTATSF1/Tat-SF1, SUPT5H/SPT5, and HTATIP2 are also important for Tat's function. Besides its effect on RNA Pol II processivity, Tat induces chromatin remodeling of proviral genes by recruiting the histone acetyltransferases (HATs) CREBBP, EP300 and PCAF to the chromatin. This also contributes to the increase in proviral transcription rate, especially when the provirus integrates in transcriptionally silent region of the host genome. To ensure maximal activation of the LTR, Tat mediates nuclear translocation of NF-kappa-B by interacting with host RELA. Through its interaction with host TBP, Tat may also modulate transcription initiation. Tat can reactivate a latently infected cell by penetrating in it and transactivating its LTR promoter. In the cytoplasm, Tat is thought to act as a translational activator of HIV-1 mRNAs. Extracellular circulating Tat can be endocytosed by surrounding uninfected cells via the binding to several surface receptors such as CD26, CXCR4, heparan sulfate proteoglycans (HSPG) or LDLR. Neurons are rarely infected, but they internalize Tat via their LDLR. Through its interaction with nuclear HATs, Tat is potentially able to control the acetylation-dependent cellular gene expression. Modulates the expression of many cellular genes involved in cell survival, proliferation or in coding for cytokines or cytokine receptors. Tat plays a role in T-cell and neurons apoptosis. Tat induced neurotoxicity and apoptosis probably contribute to neuroAIDS. Circulating Tat also acts as a chemokine-like and/or growth factor-like molecule that binds to specific receptors on the surface of the cells, affecting many cellular pathways. In the vascular system, Tat binds to ITGAV/ITGB3 and ITGA5/ITGB1 integrins dimers at the surface of endothelial cells and competes with bFGF for heparin-binding sites, leading to an excess of soluble bFGF. This Homo sapiens (Human) protein is Protein Tat.